A 278-amino-acid chain; its full sequence is Probable ribosomal RNA small subunit methyltransferase A (278 aa).

Residues N23, L25, G50, E71, D95, and N110 each contribute to the S-adenosyl-L-methionine site.

It belongs to the class I-like SAM-binding methyltransferase superfamily. rRNA adenine N(6)-methyltransferase family. RsmA subfamily.

It localises to the cytoplasm. Specifically dimethylates two adjacent adenosines in the loop of a conserved hairpin near the 3'-end of 16S rRNA in the 30S particle. May play a critical role in biogenesis of 30S subunits. The polypeptide is Probable ribosomal RNA small subunit methyltransferase A (Thermococcus gammatolerans (strain DSM 15229 / JCM 11827 / EJ3)).